Reading from the N-terminus, the 394-residue chain is DNA replication and repair protein RecF (394 aa).

ATP is bound at residue 30–37 (GSNGQGKT).

The protein belongs to the RecF family.

It localises to the cytoplasm. Its function is as follows. The RecF protein is involved in DNA metabolism; it is required for DNA replication and normal SOS inducibility. RecF binds preferentially to single-stranded, linear DNA. It also seems to bind ATP. The chain is DNA replication and repair protein RecF from Cutibacterium acnes (strain DSM 16379 / KPA171202) (Propionibacterium acnes).